A 362-amino-acid polypeptide reads, in one-letter code: Mannan endo-1,4-beta-mannosidase (362 aa).

Residues 1 to 26 form the signal peptide; that stretch reads MFKKHTISLLIIFLLASAVLAKPIEA. The region spanning 38–349 is the GH26 domain; it reads QTTKTVMNWL…YHDSWTLNKG (312 aa). A substrate-binding site is contributed by H131. The Proton donor role is filled by E193. The substrate site is built by W198 and Y268. The active-site Nucleophile is the E292. Residue 324-325 coordinates substrate; the sequence is WN.

Belongs to the glycosyl hydrolase 26 family. Homodimer.

It is found in the secreted. It carries out the reaction Random hydrolysis of (1-&gt;4)-beta-D-mannosidic linkages in mannans, galactomannans and glucomannans.. Its function is as follows. Involved in the degradation of glucomannan. Catalyzes the endo hydrolysis of beta-1,4-linked mannan, galactomannan and glucomannan. This Bacillus subtilis (strain 168) protein is Mannan endo-1,4-beta-mannosidase.